We begin with the raw amino-acid sequence, 236 residues long: 7-cyano-7-deazaguanine synthase (236 aa).

7–17 (CSGGLDSVSLA) serves as a coordination point for ATP. 4 residues coordinate Zn(2+): Cys-185, Cys-193, Cys-196, and Cys-199.

This sequence belongs to the QueC family. It depends on Zn(2+) as a cofactor.

The catalysed reaction is 7-carboxy-7-deazaguanine + NH4(+) + ATP = 7-cyano-7-deazaguanine + ADP + phosphate + H2O + H(+). Its pathway is purine metabolism; 7-cyano-7-deazaguanine biosynthesis. Catalyzes the ATP-dependent conversion of 7-carboxy-7-deazaguanine (CDG) to 7-cyano-7-deazaguanine (preQ(0)). The chain is 7-cyano-7-deazaguanine synthase from Sinorhizobium fredii (strain NBRC 101917 / NGR234).